The chain runs to 158 residues: MMRHRNRRLATIAASAIVLVVAVGLGLMALRSAVVFFYSPSEIAAEHPGIEARIRVGGLVLEESVGEAASGATRFVITDRVENVQVEYAGLLPDLFREGQGVVVEGRFAADGVLQARTVLAKHDETYMPPEVAEALREAGVWQGEGETPSAAGDGDSR.

Over 1 to 8 (MMRHRNRR) the chain is Cytoplasmic. A helical; Signal-anchor for type II membrane protein membrane pass occupies residues 9–29 (LATIAASAIVLVVAVGLGLMA). The Periplasmic portion of the chain corresponds to 30 to 158 (LRSAVVFFYS…PSAAGDGDSR (129 aa)). The heme site is built by His-123 and Tyr-127. The disordered stretch occupies residues 139-158 (AGVWQGEGETPSAAGDGDSR).

It belongs to the CcmE/CycJ family.

The protein resides in the cell inner membrane. Heme chaperone required for the biogenesis of c-type cytochromes. Transiently binds heme delivered by CcmC and transfers the heme to apo-cytochromes in a process facilitated by CcmF and CcmH. The protein is Cytochrome c-type biogenesis protein CcmE of Maricaulis maris (strain MCS10) (Caulobacter maris).